The primary structure comprises 512 residues: 3-ketoacyl-CoA synthase 9 (512 aa).

2 consecutive transmembrane segments (helical) span residues 44-64 (LITH…VTEI) and 83-103 (LVAF…YIMS). Residues 100–389 (YIMSRPRSVY…FFMTLVTKKL (290 aa)) enclose the FAE domain. Active-site residues include Cys-244, His-323, His-407, His-411, His-440, and Asn-444.

This sequence belongs to the thiolase-like superfamily. Chalcone/stilbene synthases family. As to expression, expressed in seedlings, stems, leaves, flowers and siliques. Expressed in roots, leaves, and stems, including epidermis, silique walls, sepals, the upper portion of the styles, and seed coats, but not in developing embryos.

It is found in the endoplasmic reticulum membrane. It catalyses the reaction a very-long-chain acyl-CoA + malonyl-CoA + H(+) = a very-long-chain 3-oxoacyl-CoA + CO2 + CoA. It participates in lipid metabolism; fatty acid biosynthesis. Involved in the elongation of C22 to C24 fatty acids, which are precursors for the biosynthesis of cuticular waxes, aliphatic suberins, and membrane lipids, including sphingolipids and phospholipids. The chain is 3-ketoacyl-CoA synthase 9 from Arabidopsis thaliana (Mouse-ear cress).